Reading from the N-terminus, the 700-residue chain is MAEFMWEIGTEEIPARMLPGAITAMGELTRTALQEAGLGFAQVESQGTPRRLLVVVHGLHDKQADVQEERRGPALQAAFDSDGNPTKAAQGFARGCGVDVDQLSRVETPKGTYLSYTLKQAGKGASEVLPGIMQQVFKALPWPKTMRWSDGESRFVRPVQSVTALLNGQQVAVELAENVRYTDAVSGHRFMGKGAVVVQDYASYQQAMADGKVMLKSEDRMATIRAGVLAQAASVGGVVASDEGLVAENASLTEWPVALLGRFDERYLEIPPEVLTTSMRYHQKYFPVLDAQGGLKPHFVVIANMETEDQTVLVRGYQRVLKARLEDAAFFWAEDRKIRLTDRLPDLQAVVWQAKLGSLFQKSQRMAHLASAIAARVAPQQAALAEKAGLYSKCDLVTGMVGEFPELQGIMGGYYLPRERAQDEVVALAIREHYMPAGAGDALPQSLCGRIVSLADKLDTLVGCFGMGITPTGTKDPFGLRRAALGVIRLLLQEQGLRLPLRQLCEEAYRQYGEIGLEMGEAQTVQGVLAFFYGRLQAHLKAEGVDYDLIDAVQGLNLDDLWDAVSRVKALVAFKQDAAYEALVAANKRMANILSKVEDSALDLTLGVDEAVLKASAEQGLAAAVAAVEDRVKTHSSNGRYAEALGELAALRGVIDTFFDEVMVMDEDDAVRHNRLRLLATVLGLFRQVADVSCLVVAEK.

Belongs to the class-II aminoacyl-tRNA synthetase family. In terms of assembly, tetramer of two alpha and two beta subunits.

It localises to the cytoplasm. It carries out the reaction tRNA(Gly) + glycine + ATP = glycyl-tRNA(Gly) + AMP + diphosphate. This chain is Glycine--tRNA ligase beta subunit, found in Magnetococcus marinus (strain ATCC BAA-1437 / JCM 17883 / MC-1).